Reading from the N-terminus, the 539-residue chain is Lysophospholipid acyltransferase LPEAT2 (539 aa).

The chain crosses the membrane as a helical span at residues 93-113 (LVICLPIALIRLVLFAASLAV). The HXXXXD motif signature appears at 178-183 (HVSYIE). 3 EF-hand domains span residues 426-455 (KRIFEFIDVEKVGSITFKQFLFASGHVLTQ), 457-492 (LFKQTCELAFSHCDADGDGYITIQELGEALKNTIPN), and 493-528 (LNKDEIRGMYHLLDDDQDQRISQNDLLSCLRRNPLL). 10 residues coordinate Ca(2+): Asp470, Asp472, Asp474, Tyr476, Glu481, Asp506, Asp508, Asp510, Arg512, and Asp517.

This sequence belongs to the 1-acyl-sn-glycerol-3-phosphate acyltransferase family.

The protein localises to the golgi apparatus membrane. Its subcellular location is the late endosome membrane. It carries out the reaction a 1-acyl-sn-glycero-3-phosphoethanolamine + an acyl-CoA = a 1,2-diacyl-sn-glycero-3-phosphoethanolamine + CoA. It catalyses the reaction a 1-acyl-sn-glycero-3-phosphocholine + an acyl-CoA = a 1,2-diacyl-sn-glycero-3-phosphocholine + CoA. The catalysed reaction is a 1-acyl-sn-glycero-3-phospho-L-serine + an acyl-CoA = a 1,2-diacyl-sn-glycero-3-phospho-L-serine + CoA. The protein operates within lipid metabolism; phospholipid metabolism. Its function is as follows. Possesses acyl-CoA-dependent lysophospholipid acyltransferase activity with a subset of lysophospholipids as substrates. Exhibits strong acylation activity on lysophosphatidylethanolamine (LPE), and lower activity on lysophosphatidylcholine (LPC) and lysophosphatidylserine (LPS). Exhibits acylation activity on both LPE and LPC. Has a preference for 18:1-LPE over 16:0-LPE as acceptor. Palmitoyl-CoA (16:0-CoA) is a better acyl donor than oleoyl-CoA (18:1-CoA). Among several different acyl-CoA species the best acyl donor is eicosanoyl-CoA (20:0-CoA). Activity is calcium-independent. Its activity is essential for maintaining adequate levels of phosphatidylethanolamine (PE), LPE and LPC in the cells, which is crucial for plant growth regulation. This is Lysophospholipid acyltransferase LPEAT2 from Arabidopsis thaliana (Mouse-ear cress).